A 433-amino-acid polypeptide reads, in one-letter code: tRNA-2-methylthio-N(6)-dimethylallyladenosine synthase (433 aa).

One can recognise an MTTase N-terminal domain in the interval 3 to 118 (KKLFIQTLGC…ITKAVNTPKF (116 aa)). 6 residues coordinate [4Fe-4S] cluster: Cys-12, Cys-49, Cys-81, Cys-150, Cys-154, and Cys-157. Positions 136 to 369 (RGSPYKSHIN…QNRHSEILDE (234 aa)) constitute a Radical SAM core domain. The TRAM domain maps to 372–433 (AAQKDKIFDV…RMVLYGELQI (62 aa)).

It belongs to the methylthiotransferase family. MiaB subfamily. As to quaternary structure, monomer. The cofactor is [4Fe-4S] cluster.

Its subcellular location is the cytoplasm. It catalyses the reaction N(6)-dimethylallyladenosine(37) in tRNA + (sulfur carrier)-SH + AH2 + 2 S-adenosyl-L-methionine = 2-methylsulfanyl-N(6)-dimethylallyladenosine(37) in tRNA + (sulfur carrier)-H + 5'-deoxyadenosine + L-methionine + A + S-adenosyl-L-homocysteine + 2 H(+). Its function is as follows. Catalyzes the methylthiolation of N6-(dimethylallyl)adenosine (i(6)A), leading to the formation of 2-methylthio-N6-(dimethylallyl)adenosine (ms(2)i(6)A) at position 37 in tRNAs that read codons beginning with uridine. This is tRNA-2-methylthio-N(6)-dimethylallyladenosine synthase from Campylobacter concisus (strain 13826).